The chain runs to 731 residues: Penicillin-binding protein 2a (731 aa).

Over 1–56 (MKLDKLFEKFLSLFKKETSELEDSDSTILRRSRSDRKKLAQVGPIRKFWRRYHLTK) the chain is Cytoplasmic. A helical; Signal-anchor for type II membrane protein transmembrane segment spans residues 57 to 77 (IILILGLSAGLLVGIYLFAVA). Residues 78 to 156 (KSTNVNDLQN…FLAIVTAGRS (79 aa)) form a hydrophobic; associated with cytoplasmic membrane. Required for transglycosylase activity, but not for lipid II binding region. A transglycosylase region spans residues 78–300 (KSTNVNDLQN…SQLHDKYEGK (223 aa)). Topologically, residues 78–731 (KSTNVNDLQN…IWDSIVNLFR (654 aa)) are extracellular. Catalysis depends on glutamate 131, which acts as the Proton donor; for transglycosylase activity. The interval 301–731 (ISDYRYPSYF…IWDSIVNLFR (431 aa)) is transpeptidase. Serine 410 acts as the Acyl-ester intermediate; for transpeptidase activity in catalysis. A disordered region spans residues 674–694 (ANTKRQVQTNDNSQTDDNLSD). Positions 676–690 (TKRQVQTNDNSQTDD) are enriched in polar residues.

The protein in the N-terminal section; belongs to the glycosyltransferase 51 family. This sequence in the C-terminal section; belongs to the transpeptidase family. In terms of assembly, homodimer. May also form higher order oligomers. Self-association may depend on its transmembrane and/or cytoplasmic regions. Interacts with MacP; interaction is required for the function of this protein.

It localises to the cell membrane. It is found in the secreted. The protein localises to the cell wall. It catalyses the reaction Preferential cleavage: (Ac)2-L-Lys-D-Ala-|-D-Ala. Also transpeptidation of peptidyl-alanyl moieties that are N-acyl substituents of D-alanine.. The catalysed reaction is [GlcNAc-(1-&gt;4)-Mur2Ac(oyl-L-Ala-gamma-D-Glu-L-Lys-D-Ala-D-Ala)](n)-di-trans,octa-cis-undecaprenyl diphosphate + beta-D-GlcNAc-(1-&gt;4)-Mur2Ac(oyl-L-Ala-gamma-D-Glu-L-Lys-D-Ala-D-Ala)-di-trans,octa-cis-undecaprenyl diphosphate = [GlcNAc-(1-&gt;4)-Mur2Ac(oyl-L-Ala-gamma-D-Glu-L-Lys-D-Ala-D-Ala)](n+1)-di-trans,octa-cis-undecaprenyl diphosphate + di-trans,octa-cis-undecaprenyl diphosphate + H(+). It functions in the pathway cell wall biogenesis; peptidoglycan biosynthesis. Its function is as follows. Cell wall formation. Synthesis of cross-linked peptidoglycan (PG) from the lipid intermediates. Binds dansylated lipid II and catalyzes the polymerization of glycan chains. Hydrolyzes S2d (N-benzoyl-D-alanylmercaptoacetic acid) molecule, a synthetic thiolester analog of cell wall stem peptide. Active against bocillin, a fluorescent penicillin. No transpeptidase activity with non-fluorescent lysine-containing lipid II as substrate. The sequence is that of Penicillin-binding protein 2a from Streptococcus pneumoniae serotype 2 (strain D39 / NCTC 7466).